The sequence spans 249 residues: Small ribosomal subunit protein uS2 (249 aa).

It belongs to the universal ribosomal protein uS2 family.

This Bordetella parapertussis (strain 12822 / ATCC BAA-587 / NCTC 13253) protein is Small ribosomal subunit protein uS2.